The chain runs to 449 residues: Tubulin alpha-8 chain (449 aa).

The MREC motif signature appears at 1 to 4 (MREC). Positions 11, 71, 140, 144, 145, 179, 206, and 228 each coordinate GTP. A Mg(2+)-binding site is contributed by glutamate 71. Glutamate 254 is a catalytic residue.

This sequence belongs to the tubulin family. Dimer of alpha and beta chains. A typical microtubule is a hollow water-filled tube with an outer diameter of 25 nm and an inner diameter of 15 nM. Alpha-beta heterodimers associate head-to-tail to form protofilaments running lengthwise along the microtubule wall with the beta-tubulin subunit facing the microtubule plus end conferring a structural polarity. Microtubules usually have 13 protofilaments but different protofilament numbers can be found in some organisms and specialized cells. Mg(2+) is required as a cofactor. Post-translationally, some glutamate residues at the C-terminus are polyglycylated, resulting in polyglycine chains on the gamma-carboxyl group. Glycylation is mainly limited to tubulin incorporated into axonemes (cilia and flagella) whereas glutamylation is prevalent in neuronal cells, centrioles, axonemes, and the mitotic spindle. Both modifications can coexist on the same protein on adjacent residues, and lowering polyglycylation levels increases polyglutamylation, and reciprocally. Cilia and flagella glycylation is required for their stability and maintenance. Flagella glycylation controls sperm motility. In terms of processing, some glutamate residues at the C-terminus are polyglutamylated, resulting in polyglutamate chains on the gamma-carboxyl group. Polyglutamylation plays a key role in microtubule severing by spastin (SPAST). SPAST preferentially recognizes and acts on microtubules decorated with short polyglutamate tails: severing activity by SPAST increases as the number of glutamates per tubulin rises from one to eight, but decreases beyond this glutamylation threshold. Glutamylation is also involved in cilia motility. The C-terminal phenylalanine residue is cleaved by MATCAP1/KIAA0895L. In terms of tissue distribution, expressed at highest levels in the testis, followed by skeletal and heart muscle. Expressed at low levels in the developing brain.

Its subcellular location is the cytoplasm. The protein resides in the cytoskeleton. The enzyme catalyses GTP + H2O = GDP + phosphate + H(+). In terms of biological role, tubulin is the major constituent of microtubules, a cylinder consisting of laterally associated linear protofilaments composed of alpha- and beta-tubulin heterodimers. Microtubules grow by the addition of GTP-tubulin dimers to the microtubule end, where a stabilizing cap forms. Below the cap, tubulin dimers are in GDP-bound state, owing to GTPase activity of alpha-tubulin. The protein is Tubulin alpha-8 chain (Tuba8) of Mus musculus (Mouse).